The primary structure comprises 298 residues: Ribosomal protein L11 methyltransferase (298 aa).

Residues threonine 150, glycine 171, aspartate 193, and asparagine 232 each contribute to the S-adenosyl-L-methionine site.

Belongs to the methyltransferase superfamily. PrmA family.

Its subcellular location is the cytoplasm. It catalyses the reaction L-lysyl-[protein] + 3 S-adenosyl-L-methionine = N(6),N(6),N(6)-trimethyl-L-lysyl-[protein] + 3 S-adenosyl-L-homocysteine + 3 H(+). In terms of biological role, methylates ribosomal protein L11. This Chromobacterium violaceum (strain ATCC 12472 / DSM 30191 / JCM 1249 / CCUG 213 / NBRC 12614 / NCIMB 9131 / NCTC 9757 / MK) protein is Ribosomal protein L11 methyltransferase.